Consider the following 405-residue polypeptide: Probable tRNA sulfurtransferase (405 aa).

The THUMP domain occupies 60–165 (DKVMGRLKLV…LNGIFLSSET (106 aa)). ATP-binding positions include 183 to 184 (ML), 208 to 209 (HF), arginine 265, glycine 287, and glutamine 296.

It belongs to the ThiI family.

The protein localises to the cytoplasm. It carries out the reaction [ThiI sulfur-carrier protein]-S-sulfanyl-L-cysteine + a uridine in tRNA + 2 reduced [2Fe-2S]-[ferredoxin] + ATP + H(+) = [ThiI sulfur-carrier protein]-L-cysteine + a 4-thiouridine in tRNA + 2 oxidized [2Fe-2S]-[ferredoxin] + AMP + diphosphate. The catalysed reaction is [ThiS sulfur-carrier protein]-C-terminal Gly-Gly-AMP + S-sulfanyl-L-cysteinyl-[cysteine desulfurase] + AH2 = [ThiS sulfur-carrier protein]-C-terminal-Gly-aminoethanethioate + L-cysteinyl-[cysteine desulfurase] + A + AMP + 2 H(+). The protein operates within cofactor biosynthesis; thiamine diphosphate biosynthesis. Functionally, catalyzes the ATP-dependent transfer of a sulfur to tRNA to produce 4-thiouridine in position 8 of tRNAs, which functions as a near-UV photosensor. Also catalyzes the transfer of sulfur to the sulfur carrier protein ThiS, forming ThiS-thiocarboxylate. This is a step in the synthesis of thiazole, in the thiamine biosynthesis pathway. The sulfur is donated as persulfide by IscS. This Lactiplantibacillus plantarum (strain ATCC BAA-793 / NCIMB 8826 / WCFS1) (Lactobacillus plantarum) protein is Probable tRNA sulfurtransferase.